We begin with the raw amino-acid sequence, 232 residues long: Chaperone protein CssC (232 aa).

Positions 1 to 20 (MKSKLIILLTLVPFSSFSTG) are cleaved as a signal peptide.

This sequence belongs to the periplasmic pilus chaperone family.

Its subcellular location is the periplasm. Involved in the biogenesis of the CS6 fimbria. The sequence is that of Chaperone protein CssC (cssC) from Escherichia coli.